The primary structure comprises 261 residues: Type III pantothenate kinase (261 aa).

Asp-6 to Val-13 contributes to the ATP binding site. Gly-108 to Arg-111 contacts substrate. The active-site Proton acceptor is the Asp-110. Position 130 (Asp-130) interacts with K(+). Thr-133 contributes to the ATP binding site. Thr-185 provides a ligand contact to substrate.

This sequence belongs to the type III pantothenate kinase family. Homodimer. The cofactor is NH4(+). K(+) is required as a cofactor.

The protein localises to the cytoplasm. The enzyme catalyses (R)-pantothenate + ATP = (R)-4'-phosphopantothenate + ADP + H(+). The protein operates within cofactor biosynthesis; coenzyme A biosynthesis; CoA from (R)-pantothenate: step 1/5. Its function is as follows. Catalyzes the phosphorylation of pantothenate (Pan), the first step in CoA biosynthesis. The chain is Type III pantothenate kinase from Rhodospirillum centenum (strain ATCC 51521 / SW).